A 248-amino-acid chain; its full sequence is Probable transcriptional regulatory protein FTM_1203 (248 aa).

This sequence belongs to the TACO1 family.

The protein localises to the cytoplasm. This Francisella tularensis subsp. mediasiatica (strain FSC147) protein is Probable transcriptional regulatory protein FTM_1203.